The primary structure comprises 190 residues: ATP synthase subunit delta (190 aa).

The protein belongs to the ATPase delta chain family. F-type ATPases have 2 components, F(1) - the catalytic core - and F(0) - the membrane proton channel. F(1) has five subunits: alpha(3), beta(3), gamma(1), delta(1), epsilon(1). F(0) has three main subunits: a(1), b(2) and c(10-14). The alpha and beta chains form an alternating ring which encloses part of the gamma chain. F(1) is attached to F(0) by a central stalk formed by the gamma and epsilon chains, while a peripheral stalk is formed by the delta and b chains.

The protein localises to the cell inner membrane. In terms of biological role, f(1)F(0) ATP synthase produces ATP from ADP in the presence of a proton or sodium gradient. F-type ATPases consist of two structural domains, F(1) containing the extramembraneous catalytic core and F(0) containing the membrane proton channel, linked together by a central stalk and a peripheral stalk. During catalysis, ATP synthesis in the catalytic domain of F(1) is coupled via a rotary mechanism of the central stalk subunits to proton translocation. Functionally, this protein is part of the stalk that links CF(0) to CF(1). It either transmits conformational changes from CF(0) to CF(1) or is implicated in proton conduction. In Methylobacterium radiotolerans (strain ATCC 27329 / DSM 1819 / JCM 2831 / NBRC 15690 / NCIMB 10815 / 0-1), this protein is ATP synthase subunit delta.